A 688-amino-acid chain; its full sequence is Glycine--tRNA ligase beta subunit (688 aa).

It belongs to the class-II aminoacyl-tRNA synthetase family. As to quaternary structure, tetramer of two alpha and two beta subunits.

The protein localises to the cytoplasm. It catalyses the reaction tRNA(Gly) + glycine + ATP = glycyl-tRNA(Gly) + AMP + diphosphate. This chain is Glycine--tRNA ligase beta subunit, found in Vibrio parahaemolyticus serotype O3:K6 (strain RIMD 2210633).